The sequence spans 109 residues: Nucleoid-associated protein VV1_2004 (109 aa).

The protein belongs to the YbaB/EbfC family. In terms of assembly, homodimer.

It is found in the cytoplasm. The protein resides in the nucleoid. Its function is as follows. Binds to DNA and alters its conformation. May be involved in regulation of gene expression, nucleoid organization and DNA protection. The sequence is that of Nucleoid-associated protein VV1_2004 from Vibrio vulnificus (strain CMCP6).